A 237-amino-acid chain; its full sequence is Phosphoribosylaminoimidazole-succinocarboxamide synthase (237 aa).

It belongs to the SAICAR synthetase family.

The catalysed reaction is 5-amino-1-(5-phospho-D-ribosyl)imidazole-4-carboxylate + L-aspartate + ATP = (2S)-2-[5-amino-1-(5-phospho-beta-D-ribosyl)imidazole-4-carboxamido]succinate + ADP + phosphate + 2 H(+). It participates in purine metabolism; IMP biosynthesis via de novo pathway; 5-amino-1-(5-phospho-D-ribosyl)imidazole-4-carboxamide from 5-amino-1-(5-phospho-D-ribosyl)imidazole-4-carboxylate: step 1/2. The polypeptide is Phosphoribosylaminoimidazole-succinocarboxamide synthase (Hamiltonella defensa subsp. Acyrthosiphon pisum (strain 5AT)).